A 333-amino-acid polypeptide reads, in one-letter code: Homocysteine S-methyltransferase 2 (333 aa).

Positions 8 to 327 (SMKDFLKQTG…TTIRAIHKRL (320 aa)) constitute a Hcy-binding domain. 3 residues coordinate Zn(2+): cysteine 245, cysteine 312, and cysteine 313.

Monomer. Zn(2+) is required as a cofactor. As to expression, expressed predominantly in roots. Expressed in rosette leaves, cauline leaves and developing seeds.

The enzyme catalyses S-methyl-L-methionine + L-homocysteine = 2 L-methionine + H(+). In terms of biological role, catalyzes methyl transfer from S-methylmethionine (SMM) to adenosyl-L-homocysteine (AdoMet). SMM degradation (by HMT-1, HMT-2 and HMT-3) and biosynthesis (by MMT1) constitute the SMM cycle in plants, which is probably required to achieve short term control of AdoMet level. The polypeptide is Homocysteine S-methyltransferase 2 (HMT-2) (Arabidopsis thaliana (Mouse-ear cress)).